Consider the following 318-residue polypeptide: MVKVGIIGGGGYTAGELIRLLINHPNVNIIFVHSYSNARNKIIDIHTGLIGEMDLIFSDSYDLNEIDVLFLCSAHGDSKKFIETHTIHTELKIIDLSIDFRHKENAGGFVYGLPELNKEIIRKAQYIANPGCFATAVQLALLPLAKKNLLRSEIHINAITGSTGAGVRPTASSHFSWRNNNISVYKAFTHQHLKEITESLNYEPSRFNFIPVRGNFSRGIFATVYTESNLDIKDAVQIYSNYYEDSAFTFISDKNPDLKQVINTNKCILHLEKHGNKLFIISIIDNLLKGASGQAVQNFNLICGLNEKTGLFLKANAF.

C132 is an active-site residue.

The protein belongs to the NAGSA dehydrogenase family. Type 1 subfamily.

It localises to the cytoplasm. The catalysed reaction is N-acetyl-L-glutamate 5-semialdehyde + phosphate + NADP(+) = N-acetyl-L-glutamyl 5-phosphate + NADPH + H(+). Its pathway is amino-acid biosynthesis; L-arginine biosynthesis; N(2)-acetyl-L-ornithine from L-glutamate: step 3/4. Functionally, catalyzes the NADPH-dependent reduction of N-acetyl-5-glutamyl phosphate to yield N-acetyl-L-glutamate 5-semialdehyde. This chain is N-acetyl-gamma-glutamyl-phosphate reductase, found in Azobacteroides pseudotrichonymphae genomovar. CFP2.